The chain runs to 90 residues: Small ribosomal subunit protein uS19 (90 aa).

This sequence belongs to the universal ribosomal protein uS19 family.

Its function is as follows. Protein S19 forms a complex with S13 that binds strongly to the 16S ribosomal RNA. In Clostridium beijerinckii (strain ATCC 51743 / NCIMB 8052) (Clostridium acetobutylicum), this protein is Small ribosomal subunit protein uS19.